Consider the following 346-residue polypeptide: Biotin synthase (346 aa).

Residues 38-256 (QQVQVSTLLS…IAVARIMMPT (219 aa)) form the Radical SAM core domain. 3 residues coordinate [4Fe-4S] cluster: Cys-53, Cys-57, and Cys-60. Cys-97, Cys-128, Cys-188, and Arg-260 together coordinate [2Fe-2S] cluster.

Belongs to the radical SAM superfamily. Biotin synthase family. Homodimer. [4Fe-4S] cluster serves as cofactor. Requires [2Fe-2S] cluster as cofactor.

The enzyme catalyses (4R,5S)-dethiobiotin + (sulfur carrier)-SH + 2 reduced [2Fe-2S]-[ferredoxin] + 2 S-adenosyl-L-methionine = (sulfur carrier)-H + biotin + 2 5'-deoxyadenosine + 2 L-methionine + 2 oxidized [2Fe-2S]-[ferredoxin]. The protein operates within cofactor biosynthesis; biotin biosynthesis; biotin from 7,8-diaminononanoate: step 2/2. Functionally, catalyzes the conversion of dethiobiotin (DTB) to biotin by the insertion of a sulfur atom into dethiobiotin via a radical-based mechanism. In Salmonella newport (strain SL254), this protein is Biotin synthase.